The primary structure comprises 267 residues: Probable 6-oxopurine nucleoside phosphorylase (267 aa).

Residues serine 10, arginine 50 to histidine 51, and serine 83 to alanine 84 contribute to the phosphate site. A substrate-binding site is contributed by methionine 188. Residue threonine 189 participates in phosphate binding. Asparagine 212–alanine 214 serves as a coordination point for substrate.

This sequence belongs to the PNP/MTAP phosphorylase family. MTAP subfamily. In terms of assembly, homohexamer. Dimer of a homotrimer.

The enzyme catalyses a purine D-ribonucleoside + phosphate = a purine nucleobase + alpha-D-ribose 1-phosphate. It carries out the reaction guanosine + phosphate = alpha-D-ribose 1-phosphate + guanine. It catalyses the reaction inosine + phosphate = alpha-D-ribose 1-phosphate + hypoxanthine. It functions in the pathway purine metabolism; purine nucleoside salvage. In terms of biological role, purine nucleoside phosphorylase which is highly specific for 6-oxopurine nucleosides. Cleaves guanosine or inosine to respective bases and sugar-1-phosphate molecules. Involved in purine salvage. The sequence is that of Probable 6-oxopurine nucleoside phosphorylase from Thermococcus kodakarensis (strain ATCC BAA-918 / JCM 12380 / KOD1) (Pyrococcus kodakaraensis (strain KOD1)).